We begin with the raw amino-acid sequence, 347 residues long: L-threonine 3-dehydrogenase (347 aa).

Cys42 is a Zn(2+) binding site. Active-site charge relay system residues include Thr44 and His47. Positions 67, 68, 97, 100, 103, and 111 each coordinate Zn(2+). NAD(+) is bound by residues Ile179, Glu199, Arg204, Leu266 to Leu268, and Ile291 to Thr292.

Belongs to the zinc-containing alcohol dehydrogenase family. In terms of assembly, homotetramer. Requires Zn(2+) as cofactor.

It is found in the cytoplasm. The enzyme catalyses L-threonine + NAD(+) = (2S)-2-amino-3-oxobutanoate + NADH + H(+). The protein operates within amino-acid degradation; L-threonine degradation via oxydo-reductase pathway; glycine from L-threonine: step 1/2. Catalyzes the NAD(+)-dependent oxidation of L-threonine to 2-amino-3-ketobutyrate. The protein is L-threonine 3-dehydrogenase of Caldanaerobacter subterraneus subsp. tengcongensis (strain DSM 15242 / JCM 11007 / NBRC 100824 / MB4) (Thermoanaerobacter tengcongensis).